Here is a 346-residue protein sequence, read N- to C-terminus: Enkurin domain-containing protein 1 (346 aa).

Disordered stretches follow at residues 1–24 (MCEG…DYYR), 88–107 (SGVS…NLRR), and 113–132 (RRFQ…PLKA). Ser-91 carries the post-translational modification Phosphoserine. Basic and acidic residues-rich tracts occupy residues 98-107 (KDHEKENLRR) and 113-125 (RRFQ…REQG). Position 136 is a phosphoserine (Ser-136). The 93-residue stretch at 251-343 (ERRDLWRKEA…IFSRPKVFVK (93 aa)) folds into the Enkurin domain. Residues 259 to 280 (EAEARQRSQPDPSMPPGHTLMP) form a disordered region.

Interacts with alpha-tubulin. Interacts (via central region) with CCP110 (via N-terminal region); competes with CEP97 for binding to CCP110. In terms of tissue distribution, widely expressed with highest levels in testis and lung.

It localises to the cytoplasm. Its subcellular location is the cytoskeleton. The protein localises to the microtubule organizing center. The protein resides in the centrosome. It is found in the centriole. It localises to the cilium basal body. Its subcellular location is the cell projection. The protein localises to the cilium. The protein resides in the spindle. It is found in the spindle pole. It localises to the cilium axoneme. Microtubule-binding protein which regulates microtubule organization and stability. Promotes the stability of astral microtubules and facilitates the proper orientation of the mitotic spindle. This allows the oriented division of basal keratinocytes and contributes to epidermal stratification. Required for the assembly of both primary and motile cilia. Destabilizes the interaction between CCP110 and CEP97 by competing with CEP97 for binding to CCP110 which promotes the removal of CCP110 and CEP97 from the mother centriole and allows the initiation of ciliogenesis. The polypeptide is Enkurin domain-containing protein 1 (Enkd1) (Mus musculus (Mouse)).